The sequence spans 334 residues: Deoxyhypusine synthase (334 aa).

NAD(+) contacts are provided by residues 73 to 77, 99 to 101, E105, and D207; these read SNIIS and TGG. Residue 104–105 coordinates spermidine; the sequence is EE. The spermidine site is built by D212 and H256. 276-277 contributes to the NAD(+) binding site; sequence NA. Spermidine contacts are provided by residues 282–284 and 291–297; these read GSD and EAVSWGK. K297 (nucleophile) is an active-site residue. 310-311 is an NAD(+) binding site; it reads DA.

This sequence belongs to the deoxyhypusine synthase family. NAD(+) is required as a cofactor.

It carries out the reaction [eIF5A protein]-L-lysine + spermidine = [eIF5A protein]-deoxyhypusine + propane-1,3-diamine. It functions in the pathway protein modification; eIF5A hypusination. Catalyzes the NAD-dependent oxidative cleavage of spermidine and the subsequent transfer of the butylamine moiety of spermidine to the epsilon-amino group of a specific lysine residue of the eIF-5A precursor protein to form the intermediate deoxyhypusine residue. This Encephalitozoon cuniculi (strain GB-M1) (Microsporidian parasite) protein is Deoxyhypusine synthase (DYS1).